A 313-amino-acid polypeptide reads, in one-letter code: Ribosomal protein L11 methyltransferase (313 aa).

Residues T164, G185, D207, and N249 each coordinate S-adenosyl-L-methionine.

Belongs to the methyltransferase superfamily. PrmA family.

The protein resides in the cytoplasm. The enzyme catalyses L-lysyl-[protein] + 3 S-adenosyl-L-methionine = N(6),N(6),N(6)-trimethyl-L-lysyl-[protein] + 3 S-adenosyl-L-homocysteine + 3 H(+). Methylates ribosomal protein L11. The polypeptide is Ribosomal protein L11 methyltransferase (Clostridium botulinum (strain Alaska E43 / Type E3)).